A 326-amino-acid chain; its full sequence is Deoxyuridine 5'-triphosphate nucleotidohydrolase (326 aa).

Substrate-binding positions include 218–220 and 321–322; these read RSS and FG.

The protein belongs to the dUTPase family. It depends on Mg(2+) as a cofactor.

It catalyses the reaction dUTP + H2O = dUMP + diphosphate + H(+). In terms of biological role, involved in nucleotide metabolism: produces dUMP, the immediate precursor of thymidine nucleotides and decreases the intracellular concentration of dUTP to avoid uracil incorporation into viral DNA. The sequence is that of Deoxyuridine 5'-triphosphate nucleotidohydrolase from Equus caballus (Horse).